Reading from the N-terminus, the 966-residue chain is Leucine--tRNA ligase (966 aa).

The 'HIGH' region motif lies at 41–51 (PYLNGNLHAGH). The 'KMSKS' region signature appears at 632–636 (KMSKS). K635 lines the ATP pocket.

It belongs to the class-I aminoacyl-tRNA synthetase family.

Its subcellular location is the cytoplasm. It carries out the reaction tRNA(Leu) + L-leucine + ATP = L-leucyl-tRNA(Leu) + AMP + diphosphate. This chain is Leucine--tRNA ligase, found in Methanosarcina barkeri (strain Fusaro / DSM 804).